The following is a 186-amino-acid chain: Bifunctional protein PyrR (186 aa).

The short motif at 101 to 113 (VVLVDDVLYTGRT) is the PRPP-binding element.

It belongs to the purine/pyrimidine phosphoribosyltransferase family. PyrR subfamily.

The enzyme catalyses UMP + diphosphate = 5-phospho-alpha-D-ribose 1-diphosphate + uracil. In terms of biological role, regulates the transcription of the pyrimidine nucleotide (pyr) operon in response to exogenous pyrimidines. Also displays a weak uracil phosphoribosyltransferase activity which is not physiologically significant. The chain is Bifunctional protein PyrR from Syntrophobacter fumaroxidans (strain DSM 10017 / MPOB).